The primary structure comprises 231 residues: Phosphatidylserine decarboxylase proenzyme (231 aa).

Ser188 acts as the Schiff-base intermediate with substrate; via pyruvic acid in catalysis. Ser188 is modified (pyruvic acid (Ser); by autocatalysis).

The protein belongs to the phosphatidylserine decarboxylase family. PSD-A subfamily. As to quaternary structure, heterodimer of a large membrane-associated beta subunit and a small pyruvoyl-containing alpha subunit. It depends on pyruvate as a cofactor. Is synthesized initially as an inactive proenzyme. Formation of the active enzyme involves a self-maturation process in which the active site pyruvoyl group is generated from an internal serine residue via an autocatalytic post-translational modification. Two non-identical subunits are generated from the proenzyme in this reaction, and the pyruvate is formed at the N-terminus of the alpha chain, which is derived from the carboxyl end of the proenzyme. The post-translation cleavage follows an unusual pathway, termed non-hydrolytic serinolysis, in which the side chain hydroxyl group of the serine supplies its oxygen atom to form the C-terminus of the beta chain, while the remainder of the serine residue undergoes an oxidative deamination to produce ammonia and the pyruvoyl prosthetic group on the alpha chain.

The protein resides in the cell membrane. The catalysed reaction is a 1,2-diacyl-sn-glycero-3-phospho-L-serine + H(+) = a 1,2-diacyl-sn-glycero-3-phosphoethanolamine + CO2. The protein operates within phospholipid metabolism; phosphatidylethanolamine biosynthesis; phosphatidylethanolamine from CDP-diacylglycerol: step 2/2. Catalyzes the formation of phosphatidylethanolamine (PtdEtn) from phosphatidylserine (PtdSer). The sequence is that of Phosphatidylserine decarboxylase proenzyme from Rickettsia akari (strain Hartford).